Reading from the N-terminus, the 307-residue chain is Ribonuclease Z (307 aa).

Zn(2+) contacts are provided by histidine 63, histidine 65, aspartate 67, histidine 68, histidine 141, aspartate 212, and histidine 270. Aspartate 67 serves as the catalytic Proton acceptor.

The protein belongs to the RNase Z family. In terms of assembly, homodimer. The cofactor is Zn(2+).

It carries out the reaction Endonucleolytic cleavage of RNA, removing extra 3' nucleotides from tRNA precursor, generating 3' termini of tRNAs. A 3'-hydroxy group is left at the tRNA terminus and a 5'-phosphoryl group is left at the trailer molecule.. Functionally, zinc phosphodiesterase, which displays some tRNA 3'-processing endonuclease activity. Probably involved in tRNA maturation, by removing a 3'-trailer from precursor tRNA. This is Ribonuclease Z from Bacillus cereus (strain ATCC 14579 / DSM 31 / CCUG 7414 / JCM 2152 / NBRC 15305 / NCIMB 9373 / NCTC 2599 / NRRL B-3711).